The sequence spans 265 residues: Small ribosomal subunit protein uS2 (265 aa).

Residues 231–265 form a disordered region; sequence VEEEYEDYEGAEDDYEYDETEYTDSVIPDDEEEAE.

The protein belongs to the universal ribosomal protein uS2 family.

This chain is Small ribosomal subunit protein uS2, found in Trichormus variabilis (strain ATCC 29413 / PCC 7937) (Anabaena variabilis).